We begin with the raw amino-acid sequence, 179 residues long: Peptidyl-tRNA hydrolase (179 aa).

Tyr15 serves as a coordination point for tRNA. The Proton acceptor role is filled by His20. The tRNA site is built by Tyr66, Asn68, and Asn114.

The protein belongs to the PTH family. Monomer.

Its subcellular location is the cytoplasm. It catalyses the reaction an N-acyl-L-alpha-aminoacyl-tRNA + H2O = an N-acyl-L-amino acid + a tRNA + H(+). Functionally, hydrolyzes ribosome-free peptidyl-tRNAs (with 1 or more amino acids incorporated), which drop off the ribosome during protein synthesis, or as a result of ribosome stalling. Catalyzes the release of premature peptidyl moieties from peptidyl-tRNA molecules trapped in stalled 50S ribosomal subunits, and thus maintains levels of free tRNAs and 50S ribosomes. This chain is Peptidyl-tRNA hydrolase, found in Chlamydia trachomatis serovar L2 (strain ATCC VR-902B / DSM 19102 / 434/Bu).